The sequence spans 409 residues: Histidine--tRNA ligase (409 aa).

The protein belongs to the class-II aminoacyl-tRNA synthetase family. As to quaternary structure, homodimer.

It localises to the cytoplasm. It carries out the reaction tRNA(His) + L-histidine + ATP = L-histidyl-tRNA(His) + AMP + diphosphate + H(+). In Campylobacter fetus subsp. fetus (strain 82-40), this protein is Histidine--tRNA ligase.